The following is a 431-amino-acid chain: Chaperone SurA (431 aa).

A signal peptide spans 1-20 (MKNWRTLILGLALSASTAFA). PpiC domains lie at 171-272 (NDEL…KVND) and 282-382 (VTET…QLLD).

Its subcellular location is the periplasm. The catalysed reaction is [protein]-peptidylproline (omega=180) = [protein]-peptidylproline (omega=0). Chaperone involved in the correct folding and assembly of outer membrane proteins. Recognizes specific patterns of aromatic residues and the orientation of their side chains, which are found more frequently in integral outer membrane proteins. May act in both early periplasmic and late outer membrane-associated steps of protein maturation. The sequence is that of Chaperone SurA from Pectobacterium atrosepticum (strain SCRI 1043 / ATCC BAA-672) (Erwinia carotovora subsp. atroseptica).